The sequence spans 276 residues: Phosphonates import ATP-binding protein PhnC (276 aa).

The region spanning I5–L253 is the ABC transporter domain. G37–S44 contributes to the ATP binding site.

The protein belongs to the ABC transporter superfamily. Phosphonates importer (TC 3.A.1.9.1) family. In terms of assembly, the complex is composed of two ATP-binding proteins (PhnC), two transmembrane proteins (PhnE) and a solute-binding protein (PhnD).

The protein localises to the cell inner membrane. It catalyses the reaction phosphonate(out) + ATP + H2O = phosphonate(in) + ADP + phosphate + H(+). Part of the ABC transporter complex PhnCDE involved in phosphonates import. Responsible for energy coupling to the transport system. The chain is Phosphonates import ATP-binding protein PhnC from Stutzerimonas stutzeri (Pseudomonas stutzeri).